Consider the following 346-residue polypeptide: MLAQSHFFSKSFDLIPPQSPALRSANPSLRISSSYSNSRLSFLSSSAIAVPVSRRRFCLTMASNSKRPNISNESPSELSDTELDRFAAVGNALADASGEVIRKYFRKKFDIVDKDDMSPVTIADQMAEEAMVSIIFQNLPSHAIYGEEKGWRCKEESADYVWVLDPIDGTKSFITGKPVFGTLIALLYKGKPILGLIDQPILKERWIGMNGRRTKLNGEDISTRSCPKLSQAYLYTTSPHLFSEEAEKAYSRVRDKVKVPLYGCDCYAYALLASGFVDLVIESGLKPYDFLALVPVIEGAGGTITDWTGKRFLWEASSSAVATSFNVVAAGDSDIHQQALESLEWH.

The N-terminal 61 residues, 1–61 (MLAQSHFFSK…VSRRRFCLTM (61 aa)), are a transit peptide targeting the chloroplast. Mg(2+) contacts are provided by Glu-147, Asp-165, and Asp-168. Glu-147 contacts substrate. Residues 167–170 (IDGT), 263–265 (GCD), Glu-282, and Asp-289 contribute to the substrate site. Asp-289 serves as a coordination point for Mg(2+).

The protein belongs to the inositol monophosphatase superfamily. It depends on Mg(2+) as a cofactor. In terms of tissue distribution, ubiquitous. High expression in roots. Expressed in pistil and seed endosperm.

It is found in the plastid. Its subcellular location is the chloroplast. The enzyme catalyses a myo-inositol phosphate + H2O = myo-inositol + phosphate. The catalysed reaction is L-histidinol phosphate + H2O = L-histidinol + phosphate. It catalyses the reaction beta-L-galactose 1-phosphate + H2O = L-galactose + phosphate. The protein operates within amino-acid biosynthesis; L-histidine biosynthesis; L-histidine from 5-phospho-alpha-D-ribose 1-diphosphate: step 8/9. It functions in the pathway polyol metabolism; myo-inositol biosynthesis; myo-inositol from D-glucose 6-phosphate: step 2/2. In terms of biological role, phosphatase required for histidine production. Also acts on L-galactose 1-phosphate (L-Gal 1-P), D-myoinositol 3-phosphate (D-Ins 3-P) and D-myoinositol 1-phosphate (D-Ins 1-P). The chain is Bifunctional phosphatase IMPL2, chloroplastic (HISN7) from Arabidopsis thaliana (Mouse-ear cress).